We begin with the raw amino-acid sequence, 274 residues long: Phosphatidylglycerol--prolipoprotein diacylglyceryl transferase (274 aa).

7 consecutive transmembrane segments (helical) span residues 22–42, 61–81, 96–116, 125–145, 177–197, 204–224, and 238–258; these read LSVR…MWLA, LLFY…VLFY, IWTG…AMVW, FFTV…VGRI, SQLY…NLFW, GAIS…VEFV, and ISMG…MIWV. Arg144 is an a 1,2-diacyl-sn-glycero-3-phospho-(1'-sn-glycerol) binding site.

The protein belongs to the Lgt family.

Its subcellular location is the cell inner membrane. It carries out the reaction L-cysteinyl-[prolipoprotein] + a 1,2-diacyl-sn-glycero-3-phospho-(1'-sn-glycerol) = an S-1,2-diacyl-sn-glyceryl-L-cysteinyl-[prolipoprotein] + sn-glycerol 1-phosphate + H(+). It participates in protein modification; lipoprotein biosynthesis (diacylglyceryl transfer). Functionally, catalyzes the transfer of the diacylglyceryl group from phosphatidylglycerol to the sulfhydryl group of the N-terminal cysteine of a prolipoprotein, the first step in the formation of mature lipoproteins. This chain is Phosphatidylglycerol--prolipoprotein diacylglyceryl transferase, found in Aeromonas hydrophila subsp. hydrophila (strain ATCC 7966 / DSM 30187 / BCRC 13018 / CCUG 14551 / JCM 1027 / KCTC 2358 / NCIMB 9240 / NCTC 8049).